We begin with the raw amino-acid sequence, 369 residues long: Histidinol-phosphate aminotransferase 2 (369 aa).

The residue at position 227 (Lys227) is an N6-(pyridoxal phosphate)lysine.

Belongs to the class-II pyridoxal-phosphate-dependent aminotransferase family. Histidinol-phosphate aminotransferase subfamily. In terms of assembly, homodimer. It depends on pyridoxal 5'-phosphate as a cofactor.

It catalyses the reaction L-histidinol phosphate + 2-oxoglutarate = 3-(imidazol-4-yl)-2-oxopropyl phosphate + L-glutamate. It functions in the pathway amino-acid biosynthesis; L-histidine biosynthesis; L-histidine from 5-phospho-alpha-D-ribose 1-diphosphate: step 7/9. This is Histidinol-phosphate aminotransferase 2 (hisC2) from Mesorhizobium japonicum (strain LMG 29417 / CECT 9101 / MAFF 303099) (Mesorhizobium loti (strain MAFF 303099)).